Reading from the N-terminus, the 375-residue chain is Succinyl-diaminopimelate desuccinylase (375 aa).

His66 contributes to the Zn(2+) binding site. Residue Asp68 is part of the active site. Zn(2+) is bound at residue Asp99. Glu133 functions as the Proton acceptor in the catalytic mechanism. 3 residues coordinate Zn(2+): Glu134, Glu162, and His348.

The protein belongs to the peptidase M20A family. DapE subfamily. Homodimer. It depends on Zn(2+) as a cofactor. The cofactor is Co(2+).

It catalyses the reaction N-succinyl-(2S,6S)-2,6-diaminopimelate + H2O = (2S,6S)-2,6-diaminopimelate + succinate. It functions in the pathway amino-acid biosynthesis; L-lysine biosynthesis via DAP pathway; LL-2,6-diaminopimelate from (S)-tetrahydrodipicolinate (succinylase route): step 3/3. Functionally, catalyzes the hydrolysis of N-succinyl-L,L-diaminopimelic acid (SDAP), forming succinate and LL-2,6-diaminopimelate (DAP), an intermediate involved in the bacterial biosynthesis of lysine and meso-diaminopimelic acid, an essential component of bacterial cell walls. In Yersinia pestis bv. Antiqua (strain Antiqua), this protein is Succinyl-diaminopimelate desuccinylase.